Reading from the N-terminus, the 327-residue chain is Aldo-keto reductase family 1 member A1 (327 aa).

Residues 13 to 22 (GQKIPLIGLG), Thr-23, Trp-24, and Asp-47 contribute to the NADP(+) site. Tyr-52 (proton donor) is an active-site residue. Residues Ser-164, Asn-165, Ser-213, Leu-215, Ser-217, Lys-265, Ser-266, Val-267, Thr-268, Arg-271, Gln-274, and Asn-275 each contribute to the NADP(+) site.

The protein belongs to the aldo/keto reductase family.

It localises to the cytoplasm. The protein localises to the cytosol. It is found in the apical cell membrane. It carries out the reaction a primary alcohol + NADP(+) = an aldehyde + NADPH + H(+). The catalysed reaction is S-nitroso-CoA + NADPH + H(+) = sulfinamide-CoA + NADP(+). It catalyses the reaction S-nitrosoglutathione + NADPH + H(+) = S-(hydroxysulfenamide)glutathione + NADP(+). In terms of biological role, catalyzes the NADPH-dependent reduction of a wide variety of carbonyl-containing compounds to their corresponding alcohols. Displays enzymatic activity towards endogenous metabolites such as aromatic and aliphatic aldehydes, ketones, monosaccharides and bile acids. Acts as an aldehyde-detoxification enzyme. Also acts as an inhibitor of protein S-nitrosylation by mediating degradation of S-nitroso-coenzyme A (S-nitroso-CoA), a cofactor required to S-nitrosylate proteins. Also acts as a S-nitroso-glutathione reductase by catalyzing the NADPH-dependent reduction of S-nitrosoglutathione. Displays no reductase activity towards retinoids. This chain is Aldo-keto reductase family 1 member A1 (akr1a1), found in Xenopus tropicalis (Western clawed frog).